Consider the following 403-residue polypeptide: Zinc finger CCHC domain-containing protein 3 (403 aa).

Residues 1–158 (MATGGGAEEE…PLQDEPAAAA (158 aa)) are disordered. Composition is skewed to basic and acidic residues over residues 26–38 (ARGEEADGGREKM) and 47–65 (LAEKKGEFREPRPPRREEE). Gly residues predominate over residues 67–79 (GGGGGSAGLGGPA). The segment covering 95–121 (GDPKGRRRDPAGEAVDPRKKKGAAEAG) has biased composition (basic and acidic residues). Positions 128 to 139 (AAAAAMATPARP) are enriched in low complexity. The residue at position 201 (tyrosine 201) is a Phosphotyrosine. 3 CCHC-type zinc fingers span residues 335-350 (CFKCGSRTHMSGSCTQ), 352-368 (RCFRCGEEGHLSPYCRK), and 372-387 (CNLCGKRGHAFAQCPK).

As to quaternary structure, interacts with CGAS. Interacts with RIGI. Interacts with IFIH1/MDA5.

It localises to the cytoplasm. In terms of biological role, nucleic acid-binding protein involved in innate immune response to DNA and RNA viruses. Binds DNA and RNA in the cytoplasm and acts by promoting recognition of viral nucleic acids by virus sensors, such as RIGI, IFIH1/MDA5 and CGAS. Acts as a co-sensor for recognition of double-stranded DNA (dsDNA) by cGAS in the cytoplasm, thereby playing a role in innate immune response to cytosolic dsDNA and DNA virus. Binds dsDNA and probably acts by promoting sensing of dsDNA by CGAS, leading to enhance CGAS oligomerization and activation. Promotes sensing of viral RNA by RIGI-like receptors proteins RIGI and IFIH1/MDA5 via two mechanisms: binds double-stranded RNA (dsRNA), enhancing the binding of RIGI and IFIH1/MDA5 to dsRNA and promotes 'Lys-63'-linked ubiquitination and subsequent activation of RIGI and IFIH1/MDA5. This Homo sapiens (Human) protein is Zinc finger CCHC domain-containing protein 3.